We begin with the raw amino-acid sequence, 271 residues long: 2,3,4,5-tetrahydropyridine-2,6-dicarboxylate N-succinyltransferase (271 aa).

Belongs to the transferase hexapeptide repeat family.

It is found in the cytoplasm. The catalysed reaction is (S)-2,3,4,5-tetrahydrodipicolinate + succinyl-CoA + H2O = (S)-2-succinylamino-6-oxoheptanedioate + CoA. It participates in amino-acid biosynthesis; L-lysine biosynthesis via DAP pathway; LL-2,6-diaminopimelate from (S)-tetrahydrodipicolinate (succinylase route): step 1/3. The protein is 2,3,4,5-tetrahydropyridine-2,6-dicarboxylate N-succinyltransferase of Coxiella burnetii (strain CbuG_Q212) (Coxiella burnetii (strain Q212)).